A 210-amino-acid polypeptide reads, in one-letter code: Riboflavin kinase (210 aa).

Positions 1–11 (MRPSNPRPPVT) are enriched in pro residues. The segment at 1–24 (MRPSNPRPPVTGPDSGPEAPFPIR) is disordered. Residues threonine 44 and asparagine 46 each coordinate Mg(2+). The Nucleophile role is filled by glutamate 113.

This sequence belongs to the flavokinase family. Requires Zn(2+) as cofactor. Mg(2+) is required as a cofactor.

The enzyme catalyses riboflavin + ATP = FMN + ADP + H(+). It functions in the pathway cofactor biosynthesis; FMN biosynthesis; FMN from riboflavin (ATP route): step 1/1. Its function is as follows. Catalyzes the phosphorylation of riboflavin (vitamin B2) to form flavin mononucleotide (FMN) coenzyme. In Emericella nidulans (strain FGSC A4 / ATCC 38163 / CBS 112.46 / NRRL 194 / M139) (Aspergillus nidulans), this protein is Riboflavin kinase (fmn1).